A 262-amino-acid chain; its full sequence is MGKTFSQLGSWREDENKSILSSKPAIGSKAVNYSSTGSSKSFCSCVPCEGTADASFVTCPTCQGSGKIPQELEKQLVALIPYGDQRLKPKHTKLFVFLAVLICLVTSSFIVFFLFPRSVIVQPAGLNSSTVAFDEADIYLNITNILNISNGNYYPIMVTQLTLEVLHLSLVVGQVSNNLLLHIGPLASEQMFYAVATKIRDENTYKICTWLEIKVHHVLLHIQGTLTCSYLSHSEQLVFQSYEYVDCRGNASVPHQLTPHPP.

A helical transmembrane segment spans residues 95–115 (FVFLAVLICLVTSSFIVFFLF).

The protein belongs to the TMEM106 family. As to expression, expressed in renal cells (at protein level). Expressed in epithelial cells.

The protein localises to the cell membrane. Functionally, activates macrophages and polarizes them into M1-like macrophages through the activation of the MAPK and NF-kappaB signaling pathway. Upon activation, up-regulates the expression of CD80, CD86, CD69 and MHC II on macrophages, and induces the release of pro-inflammatory cytokines such as TNF, IL1B, IL6, CCL2 and nitric oxide. May play a role in inhibition of proliferation and migration. The protein is Transmembrane protein 106A (TMEM106A) of Homo sapiens (Human).